A 453-amino-acid polypeptide reads, in one-letter code: Chromosomal replication initiator protein DnaA (453 aa).

The tract at residues 1–71 is domain I, interacts with DnaA modulators; the sequence is MSEKEIWEKV…QAILFDVVGY (71 aa). The domain II stretch occupies residues 71–114; sequence YEVKPHFITTEELANYSNNETATPKEATKPSTETTEDNHVLGRE. The tract at residues 115-331 is domain III, AAA+ region; that stretch reads QFNAHNTFDT…GALTRLLAYS (217 aa). Positions 159, 161, 162, and 163 each coordinate ATP. Residues 332 to 453 are domain IV, binds dsDNA; sequence QLLGKPITTE…ENLEKEIRNV (122 aa).

This sequence belongs to the DnaA family. Oligomerizes as a right-handed, spiral filament on DNA at oriC.

The protein resides in the cytoplasm. In terms of biological role, plays an essential role in the initiation and regulation of chromosomal replication. ATP-DnaA binds to the origin of replication (oriC) to initiate formation of the DNA replication initiation complex once per cell cycle. Binds the DnaA box (a 9 base pair repeat at the origin) and separates the double-stranded (ds)DNA. Forms a right-handed helical filament on oriC DNA; dsDNA binds to the exterior of the filament while single-stranded (ss)DNA is stabiized in the filament's interior. The ATP-DnaA-oriC complex binds and stabilizes one strand of the AT-rich DNA unwinding element (DUE), permitting loading of DNA polymerase. After initiation quickly degrades to an ADP-DnaA complex that is not apt for DNA replication. Binds acidic phospholipids. The sequence is that of Chromosomal replication initiator protein DnaA from Staphylococcus aureus (strain MRSA252).